The primary structure comprises 185 residues: MGQQVLKSSNEKMEKAVAAYSRELATVRAGRASASVLDKVQVDYYGAPTPVVQLANITVPEARLLVIQPYDKTSIGDIEKAILKADLGLNPSNDGTVIRIAFPALTEERRRDLVKVVKKYAEEAKVAVRNVRRDGNDDLKKLEKAGEITEDDLRGYTEDIQKETDKYIAKVDEIAKNKEKEIMEV.

This sequence belongs to the RRF family.

It is found in the cytoplasm. Responsible for the release of ribosomes from messenger RNA at the termination of protein biosynthesis. May increase the efficiency of translation by recycling ribosomes from one round of translation to another. This chain is Ribosome-recycling factor, found in Bacillus anthracis (strain CDC 684 / NRRL 3495).